The primary structure comprises 137 residues: uncharacterized protein (137 aa).

Transmembrane regions (helical) follow at residues 4–26, 35–57, 62–84, 89–111, and 116–135; these read AIIL…KIVC, IVVN…NIII, ILTY…YYAL, ASIV…ILFL, and TLPQ…LLSI. The EamA domain occupies 13-135; sequence VFYGVGTFFA…IIIGIILLSI (123 aa).

It localises to the cell membrane. This is an uncharacterized protein from Methanocaldococcus jannaschii (strain ATCC 43067 / DSM 2661 / JAL-1 / JCM 10045 / NBRC 100440) (Methanococcus jannaschii).